Reading from the N-terminus, the 320-residue chain is Glycerol-3-phosphate dehydrogenase [NAD(P)+] (320 aa).

Positions 11, 30, and 102 each coordinate NADPH. The sn-glycerol 3-phosphate site is built by Lys-102, Gly-130, and Ser-132. Ala-134 lines the NADPH pocket. Sn-glycerol 3-phosphate is bound by residues Lys-185, Asp-238, Ser-248, Arg-249, and Asn-250. Residue Lys-185 is the Proton acceptor of the active site. Arg-249 provides a ligand contact to NADPH. Glu-270 lines the NADPH pocket.

The protein belongs to the NAD-dependent glycerol-3-phosphate dehydrogenase family.

The protein localises to the cytoplasm. It catalyses the reaction sn-glycerol 3-phosphate + NAD(+) = dihydroxyacetone phosphate + NADH + H(+). The enzyme catalyses sn-glycerol 3-phosphate + NADP(+) = dihydroxyacetone phosphate + NADPH + H(+). Its pathway is membrane lipid metabolism; glycerophospholipid metabolism. Functionally, catalyzes the reduction of the glycolytic intermediate dihydroxyacetone phosphate (DHAP) to sn-glycerol 3-phosphate (G3P), the key precursor for phospholipid synthesis. The sequence is that of Glycerol-3-phosphate dehydrogenase [NAD(P)+] from Ruegeria sp. (strain TM1040) (Silicibacter sp.).